A 521-amino-acid polypeptide reads, in one-letter code: Ribonuclease Y (521 aa).

The chain crosses the membrane as a helical span at residues 5-25; it reads LLLILTAVIMLIVGFAVGAIL. The disordered stretch occupies residues 77 to 107; it reads ELKDRRGEVQKQENRLIQREETMDRKDATLD. The KH domain maps to 211–271; that stretch reads TVTVVTLPND…IRREIARMTL (61 aa). The 94-residue stretch at 337–430 folds into the HD domain; it reads VLNHSIEVAK…VAASDAISAA (94 aa).

The protein belongs to the RNase Y family.

It localises to the cell membrane. Endoribonuclease that initiates mRNA decay. The protein is Ribonuclease Y of Latilactobacillus sakei subsp. sakei (strain 23K) (Lactobacillus sakei subsp. sakei).